Reading from the N-terminus, the 500-residue chain is Probable malate:quinone oxidoreductase (500 aa).

It belongs to the MQO family. FAD is required as a cofactor.

It catalyses the reaction (S)-malate + a quinone = a quinol + oxaloacetate. It participates in carbohydrate metabolism; tricarboxylic acid cycle; oxaloacetate from (S)-malate (quinone route): step 1/1. The protein is Probable malate:quinone oxidoreductase of Corynebacterium aurimucosum (strain ATCC 700975 / DSM 44827 / CIP 107346 / CN-1) (Corynebacterium nigricans).